The chain runs to 396 residues: Purine ribonucleoside efflux pump NepI (396 aa).

The Cytoplasmic segment spans residues 1–21; that stretch reads MSEFIAENRGANAITRPNWSA. The chain crosses the membrane as a helical span at residues 22–42; it reads VFSVAFCVACLIIVEFLPVSL. Over 43 to 54 the chain is Periplasmic; the sequence is LTPMAQDLGISE. A helical membrane pass occupies residues 55–75; that stretch reads GVAGQSVTVTAFVAMFASLFI. Residues 76–85 lie on the Cytoplasmic side of the membrane; sequence TQTIQATDRR. The chain crosses the membrane as a helical span at residues 86–106; that stretch reads YVVILFAVLLTLSCLLVSFAN. A topological domain (periplasmic) is located at residue serine 107. A helical transmembrane segment spans residues 108-128; it reads FSLLLIGRACLGLALGGFWAM. The Cytoplasmic portion of the chain corresponds to 129–147; it reads SASLTMRLVPPRTVPKALS. A helical transmembrane segment spans residues 148 to 168; that stretch reads VIFGAVSIALVIAAPLGSFLG. Topologically, residues 169–175 are periplasmic; that stretch reads ELIGWRN. Residues 176 to 196 traverse the membrane as a helical segment; that stretch reads VFNAAAAMGVLCIFWIIKSLP. Over 197-215 the chain is Cytoplasmic; the sequence is SLPGEPSHQKQNTFRLLQR. A helical membrane pass occupies residues 216-236; the sequence is PGVMAGMIAIFMSFAGQFAFF. The Periplasmic portion of the chain corresponds to 237–255; the sequence is TYIRPVYMNLAGFGVDGLT. The chain crosses the membrane as a helical span at residues 256-276; sequence LVLLSFGIASFVGTSLSSFIL. The Cytoplasmic portion of the chain corresponds to 277–281; it reads KRSVK. The chain crosses the membrane as a helical span at residues 282-302; that stretch reads LALAGAPFVLALSALVLTLWG. The Periplasmic portion of the chain corresponds to 303–305; sequence SYK. Residues 306–326 traverse the membrane as a helical segment; that stretch reads IVATGVAIIWGLTFALIPVGW. The Cytoplasmic segment spans residues 327–343; the sequence is STWITRSLADQAEKAGS. The chain crosses the membrane as a helical span at residues 344–364; it reads IQVAVIQLANTCGAAIGGYAL. The Periplasmic segment spans residues 365-366; the sequence is DN. A helical membrane pass occupies residues 367 to 387; sequence IGLTSPLMLSGTLMLLTALLV. The Cytoplasmic portion of the chain corresponds to 388–396; the sequence is TAKVKMKKS.

This sequence belongs to the major facilitator superfamily. DHA1 family. NepI (TC 2.A.1.2.26) subfamily.

Its subcellular location is the cell inner membrane. The enzyme catalyses inosine(in) + H(+)(out) = inosine(out) + H(+)(in). It carries out the reaction guanosine(in) + H(+)(out) = guanosine(out) + H(+)(in). Its function is as follows. Involved in the efflux of purine ribonucleosides, such as inosine and guanosine. The protein is Purine ribonucleoside efflux pump NepI of Escherichia coli O6:H1 (strain CFT073 / ATCC 700928 / UPEC).